Here is a 338-residue protein sequence, read N- to C-terminus: 1-aminocyclopropane-1-carboxylate deaminase (338 aa).

An N6-(pyridoxal phosphate)lysine modification is found at lysine 51. The active-site Nucleophile is the serine 78.

It belongs to the ACC deaminase/D-cysteine desulfhydrase family. In terms of assembly, homotrimer. It depends on pyridoxal 5'-phosphate as a cofactor.

The catalysed reaction is 1-aminocyclopropane-1-carboxylate + H2O = 2-oxobutanoate + NH4(+). Functionally, catalyzes a cyclopropane ring-opening reaction, the irreversible conversion of 1-aminocyclopropane-1-carboxylate (ACC) to ammonia and alpha-ketobutyrate. Allows growth on ACC as a nitrogen source. The polypeptide is 1-aminocyclopropane-1-carboxylate deaminase (Burkholderia ambifaria (strain MC40-6)).